The chain runs to 469 residues: Zinc transporter SLC39A7 (469 aa).

Residues 5-25 form a helical membrane-spanning segment; sequence LGAPHWVAVGLLTWAALGLLV. Basic and acidic residues-rich tracts occupy residues 43-56 and 66-114; these read HGHS…DFHH and HTHE…EHSH. The tract at residues 43-122 is disordered; sequence HGHSHRRSHE…SHGGYGESGA (80 aa). His-66 is subject to Pros-methylhistidine. Helical transmembrane passes span 138-158, 169-189, and 214-234; these read ALGA…LIPV, LQIL…LHLI, and GPIL…LVVE. The segment covering 242–255 has biased composition (basic residues); it reads GGHGHSHGHGHTHG. The tract at residues 242–313 is disordered; that stretch reads GGHGHSHGHG…QNSEEEKTGS (72 aa). The span at 256–266 shows a compositional bias: low complexity; sequence HTQGSHGHGTQ. Residues Ser-275 and Ser-276 each carry the phosphoserine modification. Positions 295–313 are enriched in basic and acidic residues; sequence RLKDGPLRPQNSEEEKTGS. 3 consecutive transmembrane segments (helical) span residues 386-406, 417-437, and 448-468; these read LTAI…GGAV, GWVL…SVLP, and SLLE…IAHL.

The protein belongs to the ZIP transporter (TC 2.A.5) family. KE4/Catsup subfamily. In terms of assembly, homodimer. Post-translationally, methylation at some His residue by METTL9 leads to reduced zinc-binding. Rapidly phosphorylated by CK2 following Zn(2+) treatment. This phosphorylation is required for efficient cytosolic Zn(2+) release.

The protein localises to the endoplasmic reticulum membrane. The protein resides in the golgi apparatus. Its subcellular location is the cis-Golgi network membrane. The catalysed reaction is Zn(2+)(in) = Zn(2+)(out). In terms of biological role, transports Zn(2+) from the endoplasmic reticulum (ER)/Golgi apparatus to the cytosol, playing an essential role in the regulation of cytosolic zinc levels. Acts as a gatekeeper of zinc release from intracellular stores, requiring post-translational activation by phosphorylation, resulting in activation of multiple downstream pathways leading to cell growth and proliferation. Has an essential role in B cell development and is required for proper B cell receptor signaling. Plays an important role in maintaining intestinal epithelial homeostasis and skin dermis development by regulating ER function. Controls cell signaling pathways involved in glucose metabolism in skeletal muscle. Has a protective role against ER stress in different biological contexts. Mediates Zn(2+)-induced ferroptosis. The chain is Zinc transporter SLC39A7 from Canis lupus familiaris (Dog).